A 78-amino-acid polypeptide reads, in one-letter code: Large ribosomal subunit protein bL28 (78 aa).

A disordered region spans residues 1–21 (MSRVCQVTGKKPMVGNNRSHA).

The protein belongs to the bacterial ribosomal protein bL28 family.

The chain is Large ribosomal subunit protein bL28 from Shewanella piezotolerans (strain WP3 / JCM 13877).